The primary structure comprises 709 residues: Meiotic sister-chromatid recombination protein 6, mitochondrial (709 aa).

The N-terminal 29 residues, 1-29 (MLRINQRLLVRSLRDAQYQYLKSTALRFL), are a transit peptide targeting the mitochondrion.

The protein resides in the mitochondrion. In terms of biological role, may be involved in the control of meiotic sister-chromatid recombination. In Candida glabrata (strain ATCC 2001 / BCRC 20586 / JCM 3761 / NBRC 0622 / NRRL Y-65 / CBS 138) (Yeast), this protein is Meiotic sister-chromatid recombination protein 6, mitochondrial (MSC6).